The sequence spans 506 residues: Zinc finger and SCAN domain containing protein 4C (506 aa).

A disordered region spans residues 1–24 (MASQQAPAKDLQTNNLEFTPTDSS). The region spanning 37–119 (SAQLNFSPSN…RFMESLTDEC (83 aa)) is the SCAN box domain. 4 C2H2-type zinc fingers span residues 395 to 417 (YKCEECSRMFKHARSLSSHQRTH), 424 to 446 (LLCVTCQKMFKRVSDRRTHEIIH), 452 to 474 (FKCSTCEKSFSHKTNLKSHEMIH), and 480 to 503 (YVCSLCSRRFRQSSTYHRHLRNYH).

As to expression, embryonic stem (ES) cell-specific. Expressed in only 5% of ES cells at a given time, but nearly all ES cells express it at least once during 9 passages.

It localises to the nucleus. It is found in the chromosome. The protein resides in the telomere. In terms of biological role, embryonic stem (ES) cell-specific transcription factor required to regulate ES cell pluripotency. Binds telomeres and plays a key role in genomic stability in ES cells by regulating telomere elongation. Acts as an activator of spontaneous telomere sister chromatid exchange (T-SCE) and telomere elongation in undifferentiated ES cells. The chain is Zinc finger and SCAN domain containing protein 4C (Zscan4c) from Mus musculus (Mouse).